The following is a 116-amino-acid chain: Protein aq_1857 (116 aa).

Belongs to the HesB/IscA family.

In Aquifex aeolicus (strain VF5), this protein is Protein aq_1857.